We begin with the raw amino-acid sequence, 138 residues long: Small ribosomal subunit protein uS11c (138 aa).

The disordered stretch occupies residues 1–21; that stretch reads MTKSIPRIGSRRGGRIASRKN. The segment covering 9 to 21 has biased composition (basic residues); sequence GSRRGGRIASRKN.

This sequence belongs to the universal ribosomal protein uS11 family. In terms of assembly, part of the 30S ribosomal subunit.

The protein localises to the plastid. It localises to the chloroplast. The sequence is that of Small ribosomal subunit protein uS11c from Calycanthus floridus var. glaucus (Eastern sweetshrub).